The primary structure comprises 107 residues: Phosphoribosyl-ATP pyrophosphatase (107 aa).

This sequence belongs to the PRA-PH family.

The protein localises to the cytoplasm. The catalysed reaction is 1-(5-phospho-beta-D-ribosyl)-ATP + H2O = 1-(5-phospho-beta-D-ribosyl)-5'-AMP + diphosphate + H(+). Its pathway is amino-acid biosynthesis; L-histidine biosynthesis; L-histidine from 5-phospho-alpha-D-ribose 1-diphosphate: step 2/9. In Methylobacterium nodulans (strain LMG 21967 / CNCM I-2342 / ORS 2060), this protein is Phosphoribosyl-ATP pyrophosphatase.